The primary structure comprises 956 residues: Valine--tRNA ligase (956 aa).

Positions 69–79 (PNITGVLHMGH) match the 'HIGH' region motif. Residues 566–570 (KMSKS) carry the 'KMSKS' region motif. Lys-569 contacts ATP. Residues 885–911 (LCARLQKAWQKARQKVQQVERKLADAQ) are a coiled coil.

It belongs to the class-I aminoacyl-tRNA synthetase family. ValS type 1 subfamily. Monomer.

The protein resides in the cytoplasm. The enzyme catalyses tRNA(Val) + L-valine + ATP = L-valyl-tRNA(Val) + AMP + diphosphate. Its function is as follows. Catalyzes the attachment of valine to tRNA(Val). As ValRS can inadvertently accommodate and process structurally similar amino acids such as threonine, to avoid such errors, it has a 'posttransfer' editing activity that hydrolyzes mischarged Thr-tRNA(Val) in a tRNA-dependent manner. The protein is Valine--tRNA ligase of Treponema pallidum (strain Nichols).